The following is a 159-amino-acid chain: Protein-export protein SecB (159 aa).

Belongs to the SecB family. Homotetramer, a dimer of dimers. One homotetramer interacts with 1 SecA dimer.

The protein localises to the cytoplasm. One of the proteins required for the normal export of preproteins out of the cell cytoplasm. It is a molecular chaperone that binds to a subset of precursor proteins, maintaining them in a translocation-competent state. It also specifically binds to its receptor SecA. The sequence is that of Protein-export protein SecB from Bartonella bacilliformis (strain ATCC 35685 / KC583 / Herrer 020/F12,63).